A 197-amino-acid polypeptide reads, in one-letter code: Peptidyl-tRNA hydrolase (197 aa).

Tyrosine 21 is a tRNA binding site. Histidine 26 serves as the catalytic Proton acceptor. The tRNA site is built by tyrosine 72, asparagine 74, and asparagine 120.

It belongs to the PTH family. In terms of assembly, monomer.

The protein localises to the cytoplasm. It carries out the reaction an N-acyl-L-alpha-aminoacyl-tRNA + H2O = an N-acyl-L-amino acid + a tRNA + H(+). Functionally, hydrolyzes ribosome-free peptidyl-tRNAs (with 1 or more amino acids incorporated), which drop off the ribosome during protein synthesis, or as a result of ribosome stalling. In terms of biological role, catalyzes the release of premature peptidyl moieties from peptidyl-tRNA molecules trapped in stalled 50S ribosomal subunits, and thus maintains levels of free tRNAs and 50S ribosomes. The sequence is that of Peptidyl-tRNA hydrolase from Alkalilimnicola ehrlichii (strain ATCC BAA-1101 / DSM 17681 / MLHE-1).